The following is a 118-amino-acid chain: Large ribosomal subunit protein eL18 (118 aa).

The protein belongs to the eukaryotic ribosomal protein eL18 family.

This is Large ribosomal subunit protein eL18 (rpl18e) from Sulfolobus acidocaldarius (strain ATCC 33909 / DSM 639 / JCM 8929 / NBRC 15157 / NCIMB 11770).